The following is a 356-amino-acid chain: Glutamine synthetase nodule isozyme (356 aa).

The 81-residue stretch at 19–99 folds into the GS beta-grasp domain; sequence IIAEYIWIGG…VMCDAYTPAG (81 aa). The disordered stretch occupies residues 41-66; it reads PGPVSDPSKLPKWNYDGSSTGQAPGE. A GS catalytic domain is found at 106 to 356; that stretch reads KRHNAAKIFS…IADTTILWKP (251 aa).

The protein belongs to the glutamine synthetase family. As to quaternary structure, homooctamer.

The protein localises to the cytoplasm. It catalyses the reaction L-glutamate + NH4(+) + ATP = L-glutamine + ADP + phosphate + H(+). The protein is Glutamine synthetase nodule isozyme of Vigna aconitifolia (Moth bean).